Consider the following 389-residue polypeptide: Urea transporter 1 (389 aa).

Transmembrane regions (helical) follow at residues 53-73 (PVVL…VFVN), 91-110 (WWAL…ALLL), 116-136 (LIAS…MAVF), 143-163 (FWWL…FSSA), and 173-193 (LPVF…ATGH). N-linked (GlcNAc...) asparagine glycosylation occurs at asparagine 211. 4 consecutive transmembrane segments (helical) span residues 242–262 (GGIF…HAAI), 281–301 (IYFG…GGMF), 310–330 (LLAL…ANFM), and 333–353 (VGLP…LIMT).

This sequence belongs to the urea transporter family. Homotrimer; each subunit contains a pore through which urea permeates. Identified in a complex with STOM. Detected in erythrocytes (at protein level). Expressed in spleen erythroblasts and tumoral kidney.

It is found in the cell membrane. The protein localises to the basolateral cell membrane. It carries out the reaction urea(in) = urea(out). With respect to regulation, inhibited by phloretin and para-chloromercuribenzene sulfonate. Its function is as follows. Mediates the transport of urea driven by a concentration gradient across the cell membrane of erythrocytes. Also mediates the transport of urea across the cell membrane of the renal inner medullary collecting duct which is critical to the urinary concentrating mechanism. Facilitates water transport in erythrocytes. In Homo sapiens (Human), this protein is Urea transporter 1 (SLC14A1).